We begin with the raw amino-acid sequence, 709 residues long: UvrABC system protein B (709 aa).

Residues 35 to 416 (ERVEAGEKDV…YELGQADGYV (382 aa)) enclose the Helicase ATP-binding domain. 48-55 (GATGTGKS) is a binding site for ATP. The Beta-hairpin signature appears at 101 to 124 (YYDYYQPEAYVPQTDTFIEKDSSI). Positions 438 to 604 (QIDDLLEQIR…PLRKRIADIT (167 aa)) constitute a Helicase C-terminal domain. The 36-residue stretch at 666–701 (ADLIEQMSQQMHQAAADLQFELAARLRDEVGELKKE) folds into the UVR domain.

The protein belongs to the UvrB family. Forms a heterotetramer with UvrA during the search for lesions. Interacts with UvrC in an incision complex.

Its subcellular location is the cytoplasm. Its function is as follows. The UvrABC repair system catalyzes the recognition and processing of DNA lesions. A damage recognition complex composed of 2 UvrA and 2 UvrB subunits scans DNA for abnormalities. Upon binding of the UvrA(2)B(2) complex to a putative damaged site, the DNA wraps around one UvrB monomer. DNA wrap is dependent on ATP binding by UvrB and probably causes local melting of the DNA helix, facilitating insertion of UvrB beta-hairpin between the DNA strands. Then UvrB probes one DNA strand for the presence of a lesion. If a lesion is found the UvrA subunits dissociate and the UvrB-DNA preincision complex is formed. This complex is subsequently bound by UvrC and the second UvrB is released. If no lesion is found, the DNA wraps around the other UvrB subunit that will check the other stand for damage. The polypeptide is UvrABC system protein B (Micrococcus luteus (strain ATCC 4698 / DSM 20030 / JCM 1464 / CCM 169 / CCUG 5858 / IAM 1056 / NBRC 3333 / NCIMB 9278 / NCTC 2665 / VKM Ac-2230) (Micrococcus lysodeikticus)).